A 281-amino-acid polypeptide reads, in one-letter code: 2,3,4,5-tetrahydropyridine-2,6-dicarboxylate N-succinyltransferase (281 aa).

2 residues coordinate substrate: Arg108 and Asp145.

The protein belongs to the transferase hexapeptide repeat family. In terms of assembly, homotrimer.

It is found in the cytoplasm. The enzyme catalyses (S)-2,3,4,5-tetrahydrodipicolinate + succinyl-CoA + H2O = (S)-2-succinylamino-6-oxoheptanedioate + CoA. The protein operates within amino-acid biosynthesis; L-lysine biosynthesis via DAP pathway; LL-2,6-diaminopimelate from (S)-tetrahydrodipicolinate (succinylase route): step 1/3. The chain is 2,3,4,5-tetrahydropyridine-2,6-dicarboxylate N-succinyltransferase from Methylobacterium nodulans (strain LMG 21967 / CNCM I-2342 / ORS 2060).